The sequence spans 216 residues: Glutathione S-transferase D5 (216 aa).

Positions 1–80 constitute a GST N-terminal domain; that stretch reads MDFYYSPRGS…YLVEKYGKDD (80 aa). Glutathione contacts are provided by residues 50–52 and 64–66; these read HTI and ESR. The GST C-terminal domain occupies 86–207; it reads DPKKQALVNQ…KGAVELKGVF (122 aa).

It belongs to the GST superfamily. Delta family. In terms of assembly, homodimer.

It carries out the reaction RX + glutathione = an S-substituted glutathione + a halide anion + H(+). Its function is as follows. Conjugation of reduced glutathione to a wide number of exogenous and endogenous hydrophobic electrophiles. May be involved in detoxification. The sequence is that of Glutathione S-transferase D5 from Drosophila melanogaster (Fruit fly).